A 319-amino-acid chain; its full sequence is Glycine--tRNA ligase alpha subunit (319 aa).

It belongs to the class-II aminoacyl-tRNA synthetase family. In terms of assembly, tetramer of two alpha and two beta subunits.

It localises to the cytoplasm. The enzyme catalyses tRNA(Gly) + glycine + ATP = glycyl-tRNA(Gly) + AMP + diphosphate. The chain is Glycine--tRNA ligase alpha subunit from Oenococcus oeni (strain ATCC BAA-331 / PSU-1).